A 210-amino-acid chain; its full sequence is Large ribosomal subunit protein bL25 (210 aa).

It belongs to the bacterial ribosomal protein bL25 family. CTC subfamily. As to quaternary structure, part of the 50S ribosomal subunit; part of the 5S rRNA/L5/L18/L25 subcomplex. Contacts the 5S rRNA. Binds to the 5S rRNA independently of L5 and L18.

In terms of biological role, this is one of the proteins that binds to the 5S RNA in the ribosome where it forms part of the central protuberance. The protein is Large ribosomal subunit protein bL25 of Saccharophagus degradans (strain 2-40 / ATCC 43961 / DSM 17024).